The primary structure comprises 331 residues: Ferredoxin--NADP reductase 2 (331 aa).

Positions 37, 45, 50, 90, 124, 286, and 327 each coordinate FAD.

The protein belongs to the ferredoxin--NADP reductase type 2 family. As to quaternary structure, homodimer. The cofactor is FAD.

The enzyme catalyses 2 reduced [2Fe-2S]-[ferredoxin] + NADP(+) + H(+) = 2 oxidized [2Fe-2S]-[ferredoxin] + NADPH. The protein is Ferredoxin--NADP reductase 2 of Listeria monocytogenes serovar 1/2a (strain ATCC BAA-679 / EGD-e).